Consider the following 440-residue polypeptide: Chromosome partition protein MukF (440 aa).

The tract at residues 208–236 (LSETSGTLRELQDTLEAAGDKLQANLLRI) is leucine-zipper.

The protein belongs to the MukF family. As to quaternary structure, interacts, and probably forms a ternary complex, with MukE and MukB via its C-terminal region. The complex formation is stimulated by calcium or magnesium. It is required for an interaction between MukE and MukB.

It is found in the cytoplasm. It localises to the nucleoid. Its function is as follows. Involved in chromosome condensation, segregation and cell cycle progression. May participate in facilitating chromosome segregation by condensation DNA from both sides of a centrally located replisome during cell division. Not required for mini-F plasmid partitioning. Probably acts via its interaction with MukB and MukE. Overexpression results in anucleate cells. It has a calcium binding activity. This Escherichia fergusonii (strain ATCC 35469 / DSM 13698 / CCUG 18766 / IAM 14443 / JCM 21226 / LMG 7866 / NBRC 102419 / NCTC 12128 / CDC 0568-73) protein is Chromosome partition protein MukF.